We begin with the raw amino-acid sequence, 387 residues long: RNA polymerase II elongation factor ELL3 (387 aa).

Disordered regions lie at residues 127 to 148 (LTEG…EGHP) and 186 to 275 (LSNR…EEVP). Residues 230 to 239 (SPLQGLSNQD) are compositionally biased toward polar residues. Ser240 is modified (phosphoserine). The span at 240–251 (SPEEQDWGQDAD) shows a compositional bias: acidic residues. Positions 257–271 (EQSLSVQSASESPSP) are enriched in low complexity. The 111-residue stretch at 275 to 385 (PDYLLQYSTI…LILEFEEKNR (111 aa)) folds into the OCEL domain.

It belongs to the ELL/occludin family. Interacts with AFF4. Component of the super elongation complex (SEC), at least composed of EAF1, EAF2, CDK9, MLLT3/AF9, AFF (AFF1 or AFF4), the P-TEFb complex and ELL (ELL, ELL2 or ELL3). Component of the little elongation complex (LEC), at least composed of ELL (ELL, ELL2 or ELL3), ZC3H8, ICE1 and ICE2.

Its subcellular location is the nucleus. Its function is as follows. Enhancer-binding elongation factor that specifically binds enhancers in embryonic stem cells (ES cells), marks them, and is required for their future activation during stem cell specification. Elongation factor component of the super elongation complex (SEC), a complex required to increase the catalytic rate of RNA polymerase II transcription by suppressing transient pausing by the polymerase at multiple sites along the DNA. Component of the little elongation complex (LEC), a complex required to regulate small nuclear RNA (snRNA) gene transcription by RNA polymerase II and III. Does not only bind to enhancer regions of active genes, but also marks the enhancers that are in a poised or inactive state in ES cells and is required for establishing proper RNA polymerase II occupancy at developmentally regulated genes in a cohesin-dependent manner. Probably required for priming developmentally regulated genes for later recruitment of the super elongation complex (SEC), for transcriptional activation during differentiation. Required for recruitment of P-TEFb within SEC during differentiation. Probably preloaded on germ cell chromatin, suggesting that it may prime gene activation by marking enhancers as early as in the germ cells. Promoting epithelial-mesenchymal transition (EMT). The sequence is that of RNA polymerase II elongation factor ELL3 (Ell3) from Rattus norvegicus (Rat).